A 636-amino-acid polypeptide reads, in one-letter code: Poly(3-hydroxyalkanoate) polymerase subunit PhaC (636 aa).

2 disordered regions span residues 1–38 (MYNKRIKRVLPPEEMVTDSKQESGGQKNGDKTGFDATD) and 129–152 (QGTRGMQGEPLPPEPDTRKDKRFS). Basic and acidic residues predominate over residues 143–152 (PDTRKDKRFS). Residue Cys-373 is part of the active site.

The protein belongs to the PHA/PHB synthase family. Type I PhaC subfamily.

The protein resides in the cytoplasm. The enzyme catalyses (3R)-3-hydroxybutanoyl-CoA + [(3R)-hydroxybutanoate](n) = [(3R)-hydroxybutanoate](n+1) + CoA. The protein operates within biopolymer metabolism; poly-(R)-3-hydroxybutanoate biosynthesis. Its function is as follows. Polymerizes D(-)-3-hydroxybutyryl-CoA to create PHB which consists of thousands of hydroxybutyrate molecules linked end to end. PHB serves as an intracellular energy reserve material when cells grow under conditions of nutrient limitation. This Rhizobium etli (strain ATCC 51251 / DSM 11541 / JCM 21823 / NBRC 15573 / CFN 42) protein is Poly(3-hydroxyalkanoate) polymerase subunit PhaC.